An 89-amino-acid chain; its full sequence is Small ribosomal subunit protein uS15 (89 aa).

This sequence belongs to the universal ribosomal protein uS15 family. As to quaternary structure, part of the 30S ribosomal subunit. Forms a bridge to the 50S subunit in the 70S ribosome, contacting the 23S rRNA.

Its function is as follows. One of the primary rRNA binding proteins, it binds directly to 16S rRNA where it helps nucleate assembly of the platform of the 30S subunit by binding and bridging several RNA helices of the 16S rRNA. Forms an intersubunit bridge (bridge B4) with the 23S rRNA of the 50S subunit in the ribosome. In Thermosynechococcus vestitus (strain NIES-2133 / IAM M-273 / BP-1), this protein is Small ribosomal subunit protein uS15.